The following is a 403-amino-acid chain: Bifunctional enzyme IspD/IspF (403 aa).

Residues 1 to 234 are 2-C-methyl-D-erythritol 4-phosphate cytidylyltransferase; it reads MPTSKRTAAI…ARLAAMLGDI (234 aa). Residues 235 to 403 form a 2-C-methyl-D-erythritol 2,4-cyclodiphosphate synthase region; the sequence is RTGTGYDVHA…SDQEDKGWST (169 aa). Residues aspartate 241 and histidine 243 each contribute to the a divalent metal cation site. Residues 241–243 and 267–268 each bind 4-CDP-2-C-methyl-D-erythritol 2-phosphate; these read DVH and HS. Histidine 275 lines the a divalent metal cation pocket. 4-CDP-2-C-methyl-D-erythritol 2-phosphate-binding positions include 289–291, 365–368, phenylalanine 372, and arginine 375; these read DIG and TTSE.

In the N-terminal section; belongs to the IspD/TarI cytidylyltransferase family. IspD subfamily. The protein in the C-terminal section; belongs to the IspF family. It depends on a divalent metal cation as a cofactor.

It carries out the reaction 2-C-methyl-D-erythritol 4-phosphate + CTP + H(+) = 4-CDP-2-C-methyl-D-erythritol + diphosphate. The enzyme catalyses 4-CDP-2-C-methyl-D-erythritol 2-phosphate = 2-C-methyl-D-erythritol 2,4-cyclic diphosphate + CMP. It functions in the pathway isoprenoid biosynthesis; isopentenyl diphosphate biosynthesis via DXP pathway; isopentenyl diphosphate from 1-deoxy-D-xylulose 5-phosphate: step 2/6. Its pathway is isoprenoid biosynthesis; isopentenyl diphosphate biosynthesis via DXP pathway; isopentenyl diphosphate from 1-deoxy-D-xylulose 5-phosphate: step 4/6. Its function is as follows. Bifunctional enzyme that catalyzes the formation of 4-diphosphocytidyl-2-C-methyl-D-erythritol from CTP and 2-C-methyl-D-erythritol 4-phosphate (MEP) (IspD), and catalyzes the conversion of 4-diphosphocytidyl-2-C-methyl-D-erythritol 2-phosphate (CDP-ME2P) to 2-C-methyl-D-erythritol 2,4-cyclodiphosphate (ME-CPP) with a corresponding release of cytidine 5-monophosphate (CMP) (IspF). The sequence is that of Bifunctional enzyme IspD/IspF from Nitrobacter hamburgensis (strain DSM 10229 / NCIMB 13809 / X14).